The chain runs to 504 residues: MRRALPIMFQGTHSDAGKSMLATAFCRIFARNGWKTAPFKSQNMSLNSYVTLDGKEIGRAQGVQAEAAGVVATTHMNPILIKPSRDQEAQIVVHGKPYENMKASTYRNEFFHLGLELIQQSLHVLMNEYDRLVIEGAGSPAEVNLNDRELVNMRVARMANAPVVLVGDIERGGVFASLVGTLQLLEEQDRKRVIGVIINKFRGDLSLLEPGLRWFEQYTGVKVLGVVPYMHVRIDAEDSVALSRYATKKDDAKAIDVAVIRYPRISNFTDIDPFFAEPDCSVRFVSDASSLGEPDILILPGSKNTIEDVYFLTETGLFSSIQRLYERTNVTMIGICGGYQMLGECIKDPFHVETPLDAVAGLSLLPIETTLACEKTTVLSEGTLVYKNEMFDVKGYEIHMGRSIVKQGEPLILLSGKTDGCKTKDERVIGTYMHDLFHNDMFRHHLLNGVRRKKQLSPLMERPNYRQLRAQAFDDLADCVEKHVDVKAIERKMIEFQRGEHHAL.

In terms of domain architecture, GATase cobBQ-type spans 254 to 442; it reads AIDVAVIRYP…MHDLFHNDMF (189 aa). The active-site Nucleophile is the Cys-336. The active site involves His-434.

The protein belongs to the CobB/CobQ family. CobQ subfamily.

The protein operates within cofactor biosynthesis; adenosylcobalamin biosynthesis. Catalyzes amidations at positions B, D, E, and G on adenosylcobyrinic A,C-diamide. NH(2) groups are provided by glutamine, and one molecule of ATP is hydrogenolyzed for each amidation. This chain is Cobyric acid synthase, found in Anoxybacillus flavithermus (strain DSM 21510 / WK1).